Consider the following 232-residue polypeptide: MRIVGLTGGIASGKSTVSNLFKASGIPVVDADVVARDVLKKGSGGWKRVVAAFGEEILLPSGEVDRPKLGQIVFSSDSKRQLLNKLMAPYISSGIFWEILKQWASGAKVIVVDIPLLFEVKMDKWTKPIVVVWVSQETQLKRLMERDGLSEEDARNRVMAQMPLDSKRSKADVVIDNNGSLDDLHQQFEKVLIEIRRPLTWIEFWRSRQGAFSVLGSVILGLSVCKQLKIGS.

Residues 3–206 (IVGLTGGIAS…RPLTWIEFWR (204 aa)) enclose the DPCK domain. 8–15 (GGIASGKS) lines the ATP pocket.

This sequence belongs to the CoaE family.

The protein localises to the peroxisome. It carries out the reaction 3'-dephospho-CoA + ATP = ADP + CoA + H(+). Its pathway is cofactor biosynthesis; coenzyme A biosynthesis; CoA from (R)-pantothenate: step 5/5. Its function is as follows. Catalyzes the phosphorylation of the 3'-hydroxyl group of dephosphocoenzyme A to form coenzyme A. This Arabidopsis thaliana (Mouse-ear cress) protein is Dephospho-CoA kinase.